A 390-amino-acid polypeptide reads, in one-letter code: MLKCTIKNEQIETLRSGDTFVSYEIETESDLPVFEDKKFSVRRRYKDFEMLHNILSHDYNGYAIPPLPRKYTVSSFSGGSLSPIFIARRMQSLQTFLDRCSTHPVISNSMHMYQFLENNSWKSYYHNAWMQSENTKSKGNNVSGGIESSIQNLDPYAQSLYETAKQLLQNADTDLSKLEKTCVQYMNSVQNFPTDIPVPSNLSISNLDVVSVEFKRLKRNSIFLINSFHSKVITSIQDLEDYMVVFKSLIKSREQKVKQFEHFQQIVQSNSNNPDQSSRSDPNFVEATPVVQQTPELKPSPNTTIRTSSLFSIPKFFKKKRYSLGQDDANPMELLQLSFQELCIFNEKLEQELNFLRERIDVEMRKTLQMVCDCHVEYFSGILEQHAVKE.

Residues 1–123 form the PX domain; sequence MLKCTIKNEQ…QFLENNSWKS (123 aa). Residues Arg44, Lys70, and Arg89 each coordinate a 1,2-diacyl-sn-glycero-3-phospho-(1D-myo-inositol-3-phosphate).

This sequence belongs to the sorting nexin family.

The protein resides in the cytoplasm. It localises to the membrane. The chain is Sorting nexin C1711.11 from Schizosaccharomyces pombe (strain 972 / ATCC 24843) (Fission yeast).